We begin with the raw amino-acid sequence, 813 residues long: Leucine--tRNA ligase (813 aa).

Residues proline 42–histidine 52 carry the 'HIGH' region motif. Positions lysine 580–serine 584 match the 'KMSKS' region motif. Lysine 583 lines the ATP pocket.

It belongs to the class-I aminoacyl-tRNA synthetase family.

It is found in the cytoplasm. The enzyme catalyses tRNA(Leu) + L-leucine + ATP = L-leucyl-tRNA(Leu) + AMP + diphosphate. In Dehalococcoides mccartyi (strain CBDB1), this protein is Leucine--tRNA ligase.